Reading from the N-terminus, the 485-residue chain is Outer membrane protein OprM (485 aa).

A signal peptide spans 1–17; the sequence is MKRSFLSLAVAAVVLSG. Residue cysteine 18 is the site of N-palmitoyl cysteine attachment. The S-diacylglycerol cysteine moiety is linked to residue cysteine 18.

Belongs to the outer membrane factor (OMF) (TC 1.B.17) family. In terms of assembly, component of the MexAB-OprM multidrug efflux complex, composed of six MexA subunits forming a hexameric tube, binding to a MexB trimer, which interact with the trimeric OprM outer membrane channel protein. The OprM homotrimer forms a 135 Angstroms-long pore. It consists of a beta-barrel, which is probably inserted in the outer membrane, and an alpha-barrel formed by alpha-helices which probably spans the periplasm. In the ground state the periplasmic end is closed, while the outer membrane end opening is 6-8 Angstroms in diameter. OprM does not directly contact MexB; instead, MexA joins MexB and OprM by forming a funnel-like hexamer anchored to the inner membrane. MexA may initially form a hexameric ring complex with MexB prior to OprM, then OprM undergoes a conformational change as it contacts MexA, allowing the periplasmic gate to open. It is thought that, under high intracellular substrate concentration, MexB ejects substrate into the tunnel formed by MexA-OprM; as the substrate level declines, conformational changes in MexB cause efflux to reduce and stop and the complex shifts to the closed state. MexB subunit acts as a substrate:proton antiporter and activity is enhanced significantly when in complex with MexA and OprM, in vitro.

It localises to the cell outer membrane. Export of antibiotics and solvents is dramatically decreased in the presence of the protonophore carbonyl cyanide m-chlorophenylhydrazone (CCCP), therefore may be driven by a proton gradient. Antibiotic efflux is inhibited by pyridopyrimidine derivatives, such as ABI-PP, acting by binding to a hydrophobic pocket in MexB. The outer membrane component of the MexAB-OprM efflux system that confers multidrug resistance. Functions as the major efflux pump for n-hexane and p-xylene efflux. Has been shown in one study to be involved in the active efflux of the autoinducer N-(3-oxododecanoyl) homoserine lactone, thereby playing an indirect role in quorum-sensing; but has been shown in another study not to be involved in efflux of this autoinducer. Over-expression of the pump increases antibiotic and solvent efflux capacities. Can replace the OprJ outer membrane component of the MexCD-OprJ pump; the antibiotics exported are those exported by the intact MexCD pump, showing that efflux substrate specificity is not conferred by this component. Serves as the outer membrane component for the MexXY efflux system. Implicated in the secretion of the siderophore pyoverdine. OprM is probably involved in the efflux of the siderophore across the outer membrane. The sequence is that of Outer membrane protein OprM (oprM) from Pseudomonas aeruginosa (strain ATCC 15692 / DSM 22644 / CIP 104116 / JCM 14847 / LMG 12228 / 1C / PRS 101 / PAO1).